A 140-amino-acid chain; its full sequence is ATP synthase epsilon chain (140 aa).

It belongs to the ATPase epsilon chain family. F-type ATPases have 2 components, CF(1) - the catalytic core - and CF(0) - the membrane proton channel. CF(1) has five subunits: alpha(3), beta(3), gamma(1), delta(1), epsilon(1). CF(0) has three main subunits: a, b and c.

The protein resides in the cell inner membrane. Produces ATP from ADP in the presence of a proton gradient across the membrane. The protein is ATP synthase epsilon chain of Colwellia psychrerythraea (strain 34H / ATCC BAA-681) (Vibrio psychroerythus).